Consider the following 401-residue polypeptide: Acetate kinase (401 aa).

Residue N7 participates in Mg(2+) binding. K14 is an ATP binding site. Position 91 (R91) interacts with substrate. D148 serves as the catalytic Proton donor/acceptor. ATP contacts are provided by residues 208-212 (HLGNG), 283-285 (DFR), and 332-336 (GVGEN). E385 is a Mg(2+) binding site.

The protein belongs to the acetokinase family. Homodimer. Mg(2+) is required as a cofactor. It depends on Mn(2+) as a cofactor.

Its subcellular location is the cytoplasm. It catalyses the reaction acetate + ATP = acetyl phosphate + ADP. The protein operates within metabolic intermediate biosynthesis; acetyl-CoA biosynthesis; acetyl-CoA from acetate: step 1/2. In terms of biological role, catalyzes the formation of acetyl phosphate from acetate and ATP. Can also catalyze the reverse reaction. This is Acetate kinase from Thermoanaerobacter pseudethanolicus (strain ATCC 33223 / 39E) (Clostridium thermohydrosulfuricum).